Here is a 429-residue protein sequence, read N- to C-terminus: Esterase/beta-lactamase LipL (429 aa).

Ser88 (acyl-ester intermediate) is an active-site residue.

The protein belongs to the beta-lactamase family.

The protein resides in the secreted. The protein localises to the cell wall. It is found in the cell membrane. It carries out the reaction a fatty acid ester + H2O = an aliphatic alcohol + a fatty acid + H(+). The catalysed reaction is an acetyl ester + H2O = an aliphatic alcohol + acetate + H(+). It catalyses the reaction a butanoate ester + H2O = an aliphatic alcohol + butanoate + H(+). The enzyme catalyses an octanoate ester + H2O = an aliphatic alcohol + octanoate + H(+). It carries out the reaction decanoate ester + H2O = decanoate + an aliphatic alcohol + H(+). The catalysed reaction is a dodecanoate ester + H2O = an aliphatic alcohol + dodecanoate + H(+). It catalyses the reaction a tetradecanoate ester + H2O = an aliphatic alcohol + tetradecanoate + H(+). The enzyme catalyses hexadecanoate ester + H2O = an aliphatic alcohol + hexadecanoate + H(+). It carries out the reaction octadecanoate ester + H2O = an aliphatic alcohol + octadecanoate + H(+). The catalysed reaction is a hexanoate ester + H2O = an aliphatic alcohol + hexanoate + H(+). It catalyses the reaction a beta-lactam + H2O = a substituted beta-amino acid. Its activity is regulated as follows. Esterase and beta-lactamase activities are inhibited by the active site residue modifiers phenylmethanesulfonylflouride (PMSF) and diethylpyrocarbonate (DEPC). Its function is as follows. Shows both esterase and beta-lactamase activities, with a much higher activity against phenyl esters than against beta-lactams. Shows esterase activity against both long-chain and short-chain p-nitrophenol (pNP) esters, with a preference for shorter chain esters. Hydrolyzes substrates containing beta-lactam ring such as nitrocefin and ampicillin. Functions as an immunogen that activates both humoral and cell-mediated responses. The chain is Esterase/beta-lactamase LipL from Mycobacterium tuberculosis (strain ATCC 25618 / H37Rv).